A 606-amino-acid polypeptide reads, in one-letter code: ATP-dependent rRNA helicase spb4 (606 aa).

The Q motif motif lies at 1-29; that stretch reads MSFQSINIDKWLKNAVAAQGFKKMTPVQA. The Helicase ATP-binding domain occupies 32–213; sequence IPLFLKNKDL…KIAGLRNSVR (182 aa). 45-52 provides a ligand contact to ATP; the sequence is AVTGSGKT. The DEAD box signature appears at 161 to 164; sequence DEAD. One can recognise a Helicase C-terminal domain in the interval 246–400; sequence CMIHLLCTIE…ALDLSRLKVL (155 aa). A disordered region spans residues 521–574; it reads KQKEVKEKRNTRREKRKSKKEFLKAQKNEASNNLKQEIVSKAGAQETENDDLID. The stretch at 521 to 601 forms a coiled coil; that stretch reads KQKEVKEKRN…KSKKRKNQAS (81 aa). The segment covering 529–539 has biased composition (basic residues); the sequence is RNTRREKRKSK.

The protein belongs to the DEAD box helicase family. DDX55/SPB4 subfamily. As to quaternary structure, component of pre-60S ribosomal complexes.

It is found in the nucleus. The protein resides in the nucleolus. The catalysed reaction is ATP + H2O = ADP + phosphate + H(+). Functionally, ATP-binding RNA helicase involved in the biogenesis of 60S ribosomal subunits. Binds 90S pre-ribosomal particles and dissociates from pre-60S ribosomal particles after processing of 27SB pre-rRNA. Required for the normal formation of 18S rRNA through the processing of pre-rRNAs at sites A0, A1 and A2, and the normal formation of 25S and 5.8S rRNAs through the processing of pre-rRNAs at sites C1 and C2. The sequence is that of ATP-dependent rRNA helicase spb4 from Schizosaccharomyces pombe (strain 972 / ATCC 24843) (Fission yeast).